The chain runs to 461 residues: Fumarate hydratase class II (461 aa).

Residues 98–100 (SGT), 129–132 (HPND), 139–141 (SSN), and threonine 187 contribute to the substrate site. Histidine 188 (proton donor/acceptor) is an active-site residue. Serine 318 is a catalytic residue. Residues serine 319 and 324–326 (KVN) each bind substrate.

It belongs to the class-II fumarase/aspartase family. Fumarase subfamily. As to quaternary structure, homotetramer.

It is found in the cytoplasm. It catalyses the reaction (S)-malate = fumarate + H2O. It functions in the pathway carbohydrate metabolism; tricarboxylic acid cycle; (S)-malate from fumarate: step 1/1. Its function is as follows. Involved in the TCA cycle. Catalyzes the stereospecific interconversion of fumarate to L-malate. This chain is Fumarate hydratase class II, found in Rickettsia prowazekii (strain Madrid E).